A 449-amino-acid chain; its full sequence is Interferon-related developmental regulator 1 (449 aa).

Residues 1-10 (MPKNKKRNAP) show a composition bias toward basic residues. The tract at residues 1-42 (MPKNKKRNAPHRGGGGGGGSGAATSAATAGGPHRTVQPFSDE) is disordered. Gly residues predominate over residues 12 to 21 (RGGGGGGGSG). Low complexity predominate over residues 22-31 (AATSAATAGG).

Belongs to the IFRD family. In terms of assembly, interacts with PSIP1/LEDGF.

Its function is as follows. Could play a role in regulating gene activity in the proliferative and/or differentiative pathways induced by NGF. May be an autocrine factor that attenuates or amplifies the initial ligand-induced signal. In Mus musculus (Mouse), this protein is Interferon-related developmental regulator 1 (Ifrd1).